We begin with the raw amino-acid sequence, 544 residues long: pH-responsive protein 2 (544 aa).

Positions 1–22 (MLLKSLFPSILAATSFVSSVAA) are cleaved as a signal peptide. N-linked (GlcNAc...) asparagine glycosylation is found at Asn40 and Asn59. A disulfide bridge links Cys72 with Cys101. N-linked (GlcNAc...) asparagine glycosylation occurs at Asn147. Cystine bridges form between Cys214/Cys347, Cys232/Cys263, Cys369/Cys420, Cys378/Cys444, and Cys397/Cys402. An N-linked (GlcNAc...) asparagine glycan is attached at Asn408. Residues 469-514 (GSSGLGTVSGTVRTDTSQSTSDSGSGSSSSSSSSSSSSSSGSSGSK) form a disordered region. Residue Ser515 is the site of GPI-anchor amidated serine attachment. A propeptide spans 516–544 (AASIVSVNLLTKIATIGISIVVGFGLITM) (removed in mature form).

This sequence belongs to the glycosyl hydrolase 72 family.

It is found in the cell membrane. In terms of biological role, required for apical cell growth and plays an essential role in morphogenesis. May be integral to the pathogenic ability of the organism. In Candida albicans (strain SC5314 / ATCC MYA-2876) (Yeast), this protein is pH-responsive protein 2 (PHR2).